The sequence spans 106 residues: Protein translocase subunit SecE (106 aa).

Helical transmembrane passes span 20-40 and 75-95; these read LPIRVIGMAIALVIAFILAAI and IVIGVTMIASLFFWAVDSIIV.

Belongs to the SecE/SEC61-gamma family. In terms of assembly, component of the Sec protein translocase complex. Heterotrimer consisting of SecY, SecE and SecG subunits. The heterotrimers can form oligomers, although 1 heterotrimer is thought to be able to translocate proteins. Interacts with the ribosome. Interacts with SecDF, and other proteins may be involved. Interacts with SecA.

It localises to the cell inner membrane. Its function is as follows. Essential subunit of the Sec protein translocation channel SecYEG. Clamps together the 2 halves of SecY. May contact the channel plug during translocation. In Haemophilus influenzae (strain ATCC 51907 / DSM 11121 / KW20 / Rd), this protein is Protein translocase subunit SecE.